The primary structure comprises 253 residues: Probable transcriptional regulatory protein A1G_04400 (253 aa).

A disordered region spans residues 1 to 21; it reads MAGHSKFKNIQHRKGAQDKKR.

Belongs to the TACO1 family.

The protein resides in the cytoplasm. The polypeptide is Probable transcriptional regulatory protein A1G_04400 (Rickettsia rickettsii (strain Sheila Smith)).